Here is a 333-residue protein sequence, read N- to C-terminus: Fructose-1,6-bisphosphatase class 1 (333 aa).

Residues E89, D112, L114, and D115 each contribute to the Mg(2+) site. Substrate is bound by residues 115-118, N208, Y241, and K271; that span reads DGSS. Position 277 (E277) interacts with Mg(2+).

This sequence belongs to the FBPase class 1 family. Homotetramer. Mg(2+) serves as cofactor.

It is found in the cytoplasm. The enzyme catalyses beta-D-fructose 1,6-bisphosphate + H2O = beta-D-fructose 6-phosphate + phosphate. It functions in the pathway carbohydrate biosynthesis; gluconeogenesis. This chain is Fructose-1,6-bisphosphatase class 1, found in Haemophilus influenzae (strain ATCC 51907 / DSM 11121 / KW20 / Rd).